The sequence spans 221 residues: Octanoyltransferase (221 aa).

The BPL/LPL catalytic domain maps to 35–221; that stretch reads ESYENRIIFC…RELLAALLSK (187 aa). Substrate contacts are provided by residues 80-87, 152-154, and 165-167; these read RGGDITYH, AIG, and GLA. The active-site Acyl-thioester intermediate is the Cys183.

It belongs to the LipB family.

It localises to the cytoplasm. The enzyme catalyses octanoyl-[ACP] + L-lysyl-[protein] = N(6)-octanoyl-L-lysyl-[protein] + holo-[ACP] + H(+). Its pathway is protein modification; protein lipoylation via endogenous pathway; protein N(6)-(lipoyl)lysine from octanoyl-[acyl-carrier-protein]: step 1/2. In terms of biological role, catalyzes the transfer of endogenously produced octanoic acid from octanoyl-acyl-carrier-protein onto the lipoyl domains of lipoate-dependent enzymes. Lipoyl-ACP can also act as a substrate although octanoyl-ACP is likely to be the physiological substrate. The polypeptide is Octanoyltransferase (Bacteroides fragilis (strain YCH46)).